The primary structure comprises 223 residues: MNLQRLSIFGTDNIGVYIYTNNKYTVVPRGLDSETKENIVQILGTELIEAEISRSFLLGIFISGNDNGILLPKSTIDDEFRFLKENLRDCRVEVLNSKVTALGNTILTNNKAALIYPEFNDIEEKIIKETLGVEEIRRGKIAQMITVGSVGVVTNKGGLVHVDTSEKELKELEKLFGVKIDIGTVNFGSVFIRSGLVANDKGTLVGASTTGPEILRIQKALGE.

It belongs to the eIF-6 family.

Binds to the 50S ribosomal subunit and prevents its association with the 30S ribosomal subunit to form the 70S initiation complex. The chain is Translation initiation factor 6 from Saccharolobus islandicus (strain M.16.27) (Sulfolobus islandicus).